The following is a 232-amino-acid chain: Nuclear transcription factor Y subunit nfyc-1 (232 aa).

Residues Thr191–Asn232 form a disordered region. The segment covering Arg220–Asn232 has biased composition (polar residues).

This sequence belongs to the NFYC/HAP5 subunit family. As to quaternary structure, forms two NF-Y heterotrimeric transcription factor complexes: the nfya-1-NF-Y complex is composed of nfya-1, nfyb-1 and nfyc-1, and the nfya-2-NF-Y complex is composed of nfya-2, nfyb-1 and nfyc-1. Interacts with nfyb-1; the interaction is direct and is required for the interaction with either nfya-1 or nfya-2, and subsequent binding of the complex to the 5'-CCAAT-3' box motif in DNA. Expressed in certain parts of the gonads with high expression in fertilized oocytes in the uterus and mature oocytes from the distal to the proximal arm of the gonad, but weak expression in the syncytial ovaries and immature oocytes at the beginning of the proximal arm of the gonad. Expressed in the excretory cell, secretory cells in the pharyngeal terminal bulb wall, in the small ganglia surrounding the pharynx and in the neurons running anteriorly to the sensory organs in the head. Not expressed in the intestine, the hypodermis or body wall muscle surrounding the pseudocoelomic space.

The protein resides in the nucleus. It is found in the cytoplasm. The protein localises to the perikaryon. Functionally, component of sequence-specific heterotrimeric transcription factor (nfya-1-NF-Y and nfya-2-NF-Y) complexes which specifically recognize a 5'-CCAAT-3' box motif found in the promoters of its target genes to regulate their expression and control cellular identity in particular tissue types. In association with the components in the NF-Y complexes, represses the expression of the T-box transcription factor tbx-2 throughout larval development, which most likely restricts its expression to certain tissues. May act to repress txb-2 expression in conjunction with tbx-2 itself, which has an autoregulatory role. In association with the components in the nfya-1-NF-Y complex, negatively regulates the expression of the homeobox protein egl-5 to spatially restrict its expression in tissues such as the head. May regulate egl-5 expression in association with the mes-2-mes-3-mes-6 complex. The chain is Nuclear transcription factor Y subunit nfyc-1 from Caenorhabditis elegans.